We begin with the raw amino-acid sequence, 286 residues long: L-cysteine S-thiosulfotransferase subunit SoxA (286 aa).

A signal peptide spans 1 to 26; it reads MTVSKRFLAPVFAMVGGLVLAFSANA. The region spanning 80–166 is the Cytochrome c domain; it reads LAVERGADIW…ALTSYIKHQS (87 aa). Heme contacts are provided by Cys-100, Cys-103, His-104, Cys-138, Cys-202, Cys-205, and His-206. Arg-243 contacts substrate. Cys-247 contacts heme. The active-site Cysteine persulfide intermediate is the Cys-247.

This sequence belongs to the SoxA family. As to quaternary structure, heterodimer of SoxA and SoxX. Heme is required as a cofactor. Cysteine persulfide at Cys-247.

It localises to the periplasm. The catalysed reaction is L-cysteinyl-[SoxY protein] + thiosulfate + 2 Fe(III)-[cytochrome c] = S-sulfosulfanyl-L-cysteinyl-[SoxY protein] + 2 Fe(II)-[cytochrome c] + 2 H(+). It catalyses the reaction S-sulfanyl-L-cysteinyl-[SoxY protein] + thiosulfate + 2 Fe(III)-[cytochrome c] = S-(2-sulfodisulfanyl)-L-cysteinyl-[SoxY protein] + 2 Fe(II)-[cytochrome c] + 2 H(+). In terms of biological role, C-type diheme cytochrome, which is part of the SoxAX cytochrome complex involved in sulfur oxidation. The SoxAX complex catalyzes the formation of a heterodisulfide bond between the conserved cysteine residue on a sulfur carrier SoxYZ complex subunit SoxY and thiosulfate or other inorganic sulfur substrates. This leads to the liberation of two electrons, which may be transferred from the SoxAX complex to another cytochrome c that then channels them into the respiratory electron transport chain. Some electrons may be used for reductive CO(2) fixation. The polypeptide is L-cysteine S-thiosulfotransferase subunit SoxA (Pseudaminobacter salicylatoxidans).